Consider the following 334-residue polypeptide: MKENNNLEKLDPIATLETKFAKSSYFIADEIKDEKINAISTGSIHIDQITGINGIPVGKITEIYGNESSGKTTIALQTIAECQKTGGTVVLLDLEGSFDINYAKSLKVDLTKLIITQPQTGEQAFDMIETLIKTNSIDLIVIDSVAAMLPESEYQANMNEALMGAHARLMSKGLRKIQPLINKSKTAIIFINQLREKINTFFGNPEMTTGGKALKFYASLRIETKKADLIKEGINKIGIKTKVTTVKNKLAPPLQTCFIDIFFGSGFDYNNEIIDFAIQYGVLKKNGSWFYFNDNKIGQGREQLKNTLSKNNELFIQISEKTLEFVNNEKSNWQ.

65–72 (GNESSGKT) contacts ATP.

It belongs to the RecA family.

The protein localises to the cytoplasm. Its function is as follows. Can catalyze the hydrolysis of ATP in the presence of single-stranded DNA, the ATP-dependent uptake of single-stranded DNA by duplex DNA, and the ATP-dependent hybridization of homologous single-stranded DNAs. It interacts with LexA causing its activation and leading to its autocatalytic cleavage. In Ureaplasma parvum serovar 3 (strain ATCC 27815 / 27 / NCTC 11736), this protein is Protein RecA.